The primary structure comprises 306 residues: Type 2A encapsulin shell protein SrpI (306 aa).

The protein belongs to the encapsulin family. Family 2A subfamily. As to quaternary structure, the 24.5 nm encapsulin nanocompartment is formed by 60 subunits; monomers form pentamers which assemble to form shells. There are 12 positively charged pores where the pentamers meet with a minimal pore diameter of 3.7 Angstroms as well 3-fold axis channels and dimer channels.

It is found in the encapsulin nanocompartment. Shell component of a type 2A encapsulin nanocompartment. Expression in E.coli generates nanocompartments with an average diameter of 25 nm. They can be disassembled by treatment with 6M guanidine hydrochloride and reassembled with cargo. The nanocompartment is probably involved in sulfur metabolism. Probably allows passage of cysteine into its interior; during growth in light the physiological pH is 8-8.4, about 30-54% of free cysteine (charge -1) would be able to pass through the shell. The sequence is that of Type 2A encapsulin shell protein SrpI from Synechococcus elongatus (strain ATCC 33912 / PCC 7942 / FACHB-805) (Anacystis nidulans R2).